The following is a 232-amino-acid chain: 2-C-methyl-D-erythritol 4-phosphate cytidylyltransferase (232 aa).

It belongs to the IspD/TarI cytidylyltransferase family. IspD subfamily.

It catalyses the reaction 2-C-methyl-D-erythritol 4-phosphate + CTP + H(+) = 4-CDP-2-C-methyl-D-erythritol + diphosphate. Its pathway is isoprenoid biosynthesis; isopentenyl diphosphate biosynthesis via DXP pathway; isopentenyl diphosphate from 1-deoxy-D-xylulose 5-phosphate: step 2/6. Its function is as follows. Catalyzes the formation of 4-diphosphocytidyl-2-C-methyl-D-erythritol from CTP and 2-C-methyl-D-erythritol 4-phosphate (MEP). The chain is 2-C-methyl-D-erythritol 4-phosphate cytidylyltransferase from Stenotrophomonas maltophilia (strain R551-3).